A 247-amino-acid polypeptide reads, in one-letter code: VQ motif-containing protein 4 (247 aa).

Residues 1–128 (MENSPRYREA…SSSSASGFRL (128 aa)) are disordered. A Phosphoserine modification is found at S16. A compositionally biased stretch (low complexity) spans 21–37 (NSNNSCGMSSSSESNKP). Polar residues-rich tracts occupy residues 48-75 (RSES…QMLT) and 87-106 (LKPN…SSFS). A VQ motif is present at residues 67–76 (FKQVVQMLTG). 5 positions are modified to phosphoserine: S106, S155, S163, S165, and S175. Position 178 is a phosphothreonine (T178). The segment at 184-247 (PFDRSGSSNQ…VSGSSSASTS (64 aa)) is disordered. S194 carries the phosphoserine modification. Over residues 200–210 (AEEKAMKERGF) the composition is skewed to basic and acidic residues. S215 is subject to Phosphoserine. 2 positions are modified to phosphothreonine: T219 and T234. A phosphoserine mark is found at S235, S239, and S243. The span at 236–247 (PRVSGSSSASTS) shows a compositional bias: polar residues.

Interacts with MPK3 and MPK6. Phosphorylated on serine and threonine residues by MPK6 following treatment with the pathogen-associated molecular pattern (PAMP) flg22. MAP kinase-mediated phosphorylation after PAMP elicitation causes degradation of VQ4, allowing WRKY33 to promote transcription from defense genes.

The protein localises to the nucleus. In terms of biological role, acts as a negative regulator of WRKY33 transcription factor activity in the promotion of defense gene expression. Acts as a negative regulator of pathogen-associated molecular pattern (PAMP)-induced responses to modulate resistance to pathogens. This chain is VQ motif-containing protein 4, found in Arabidopsis thaliana (Mouse-ear cress).